A 501-amino-acid polypeptide reads, in one-letter code: Probable malate:quinone oxidoreductase (501 aa).

It belongs to the MQO family. FAD is required as a cofactor.

It carries out the reaction (S)-malate + a quinone = a quinol + oxaloacetate. Its pathway is carbohydrate metabolism; tricarboxylic acid cycle; oxaloacetate from (S)-malate (quinone route): step 1/1. This chain is Probable malate:quinone oxidoreductase, found in Mycolicibacterium paratuberculosis (strain ATCC BAA-968 / K-10) (Mycobacterium paratuberculosis).